The following is a 431-amino-acid chain: Enolase (431 aa).

Q167 contacts (2R)-2-phosphoglycerate. Residue E209 is the Proton donor of the active site. 3 residues coordinate Mg(2+): D246, E289, and D316. (2R)-2-phosphoglycerate contacts are provided by K341, R370, S371, and K392. The active-site Proton acceptor is K341.

The protein belongs to the enolase family. Component of the RNA degradosome, a multiprotein complex involved in RNA processing and mRNA degradation. Mg(2+) is required as a cofactor.

Its subcellular location is the cytoplasm. The protein localises to the secreted. It is found in the cell surface. It catalyses the reaction (2R)-2-phosphoglycerate = phosphoenolpyruvate + H2O. It functions in the pathway carbohydrate degradation; glycolysis; pyruvate from D-glyceraldehyde 3-phosphate: step 4/5. In terms of biological role, catalyzes the reversible conversion of 2-phosphoglycerate (2-PG) into phosphoenolpyruvate (PEP). It is essential for the degradation of carbohydrates via glycolysis. The sequence is that of Enolase from Hahella chejuensis (strain KCTC 2396).